A 224-amino-acid chain; its full sequence is Flagellar L-ring protein (224 aa).

Positions 1–15 (MIKYIALASVVLLVG) are cleaved as a signal peptide. C16 carries the N-palmitoyl cysteine lipid modification. Residue C16 is the site of S-diacylglycerol cysteine attachment.

The protein belongs to the FlgH family. In terms of assembly, the basal body constitutes a major portion of the flagellar organelle and consists of four rings (L,P,S, and M) mounted on a central rod.

Its subcellular location is the cell outer membrane. The protein localises to the bacterial flagellum basal body. Assembles around the rod to form the L-ring and probably protects the motor/basal body from shearing forces during rotation. This is Flagellar L-ring protein from Shewanella frigidimarina (strain NCIMB 400).